Consider the following 35-residue polypeptide: Jingzhaotoxin F6-27.63 (35 aa).

Intrachain disulfides connect cysteine 2/cysteine 17, cysteine 9/cysteine 22, and cysteine 16/cysteine 29.

It belongs to the neurotoxin 10 (Hwtx-1) family. 49 (Jztx-F6) subfamily. In terms of tissue distribution, expressed by the venom gland.

Its subcellular location is the secreted. Its function is as follows. Probable ion channel inhibitor. This is Jingzhaotoxin F6-27.63 from Chilobrachys guangxiensis (Chinese earth tiger tarantula).